Consider the following 172-residue polypeptide: Peptidyl-prolyl cis-trans isomerase (172 aa).

The region spanning phenylalanine 7–glutamine 170 is the PPIase cyclophilin-type domain.

Belongs to the cyclophilin-type PPIase family. Not glycosylated. Expressed in pollen.

Its subcellular location is the cytoplasm. It carries out the reaction [protein]-peptidylproline (omega=180) = [protein]-peptidylproline (omega=0). With respect to regulation, binds cyclosporin A (CsA). CsA mediates some of its effects via an inhibitory action on PPIase. Its function is as follows. PPIases accelerate the folding of proteins. It catalyzes the cis-trans isomerization of proline imidic peptide bonds in oligopeptides. This chain is Peptidyl-prolyl cis-trans isomerase (PCKR1), found in Catharanthus roseus (Madagascar periwinkle).